Consider the following 777-residue polypeptide: Endonuclease MutS2 (777 aa).

328–335 (GPNTGGKT) provides a ligand contact to ATP. Residues 702-777 (LDLRGKRYEE…GSGCTIATLG (76 aa)) enclose the Smr domain.

The protein belongs to the DNA mismatch repair MutS family. MutS2 subfamily. Homodimer. Binds to stalled ribosomes, contacting rRNA.

Functionally, endonuclease that is involved in the suppression of homologous recombination and thus may have a key role in the control of bacterial genetic diversity. Acts as a ribosome collision sensor, splitting the ribosome into its 2 subunits. Detects stalled/collided 70S ribosomes which it binds and splits by an ATP-hydrolysis driven conformational change. Acts upstream of the ribosome quality control system (RQC), a ribosome-associated complex that mediates the extraction of incompletely synthesized nascent chains from stalled ribosomes and their subsequent degradation. Probably generates substrates for RQC. This Streptococcus uberis (strain ATCC BAA-854 / 0140J) protein is Endonuclease MutS2.